The following is a 318-amino-acid chain: Melanoma-associated antigen 8 (318 aa).

Positions 1–103 are disordered; it reads MLLGQKSQRY…GPSTSPDPAH (103 aa). The MAGE domain maps to 112–311; that stretch reads LDEKVAELVR…ISYPSLHEEA (200 aa).

In terms of tissue distribution, expressed in many tumors of several types, such as melanoma, head and neck squamous cell carcinoma, lung carcinoma and breast carcinoma, but not in normal tissues except for testis and placenta.

Not known, though may play a role in embryonal development and tumor transformation or aspects of tumor progression. The polypeptide is Melanoma-associated antigen 8 (MAGEA8) (Homo sapiens (Human)).